The following is a 764-amino-acid chain: MIEPFGNQYIVARPVYSTNAFEENHKKTGRHHKTFLDHLKVCCSCSPQKAKRIVLSLFPIASWLPAYRLKEWLLSDIVSGISTGIVAVLQGLAFALLVDIPPVYGLYASFFPAIIYLFFGTSRHISVGPFPILSMMVGLAVSGAVSKAVPDRNATTLGLPNNSNNSSLLDDERVRVAAAASVTVLSGIIQLAFGILRIGFVVIYLSESLISGFTTAAAVHVLVSQLKFIFQLTVPSHTDPVSIFKVLYSVFSQIEKTNIADLVTALIVLLVVSIVKEINQRFKDKLPVPIPIEFIMTVIAAGVSYGCDFKNRFKVAVVGDMNPGFQPPITPDVETFQNTVGDCFGIAMVAFAVAFSVASVYSLKYDYPLDGNQELIALGLGNIVCGVFRGFAGSTALSRSAVQESTGGKTQIAGLIGAIIVLIVVLAIGFLLAPLQKSVLAALALGNLKGMLMQFAEIGRLWRKDKYDCLIWIMTFIFTIVLGLGLGLAASVAFQLLTIVFRTQFPKCSTLANIGRTNIYKNKKDYYDMYEPEGVKIFRCPSPIYFANIGFFRRKLIDAVGFSPLRILRKRNKALRKIRKLQKQGLLQVTPKGFICTVDTIKDSDEELDNNQIEVLDQPINTTDLPFHIDWNDDLPLNIEVPKISLHSLILDFSAVSFLDVSSVRGLKSILQEFIRIKVDVYIVGTDDDFIEKLNRYEFFDGEVKSSIFFLTIHDAVLHILMKKDYSTSKFNPSQEKDGKIDFTINTNGGLRNRVYEVPVETKF.

Topologically, residues 1-76 are cytoplasmic; it reads MIEPFGNQYI…YRLKEWLLSD (76 aa). Residues 77–97 form a helical membrane-spanning segment; the sequence is IVSGISTGIVAVLQGLAFALL. Residues 98 to 99 are Extracellular-facing; the sequence is VD. A helical transmembrane segment spans residues 100–120; sequence IPPVYGLYASFFPAIIYLFFG. Topologically, residues 121 to 124 are cytoplasmic; sequence TSRH. A helical transmembrane segment spans residues 125–145; the sequence is ISVGPFPILSMMVGLAVSGAV. The Extracellular portion of the chain corresponds to 146–175; the sequence is SKAVPDRNATTLGLPNNSNNSSLLDDERVR. Residues asparagine 153, asparagine 161, and asparagine 165 are each glycosylated (N-linked (GlcNAc...) asparagine). The helical transmembrane segment at 176-196 threads the bilayer; the sequence is VAAAASVTVLSGIIQLAFGIL. Residue arginine 197 is a topological domain, cytoplasmic. Residues 198–218 traverse the membrane as a helical segment; it reads IGFVVIYLSESLISGFTTAAA. Over 219–257 the chain is Extracellular; that stretch reads VHVLVSQLKFIFQLTVPSHTDPVSIFKVLYSVFSQIEKT. A helical transmembrane segment spans residues 258–278; the sequence is NIADLVTALIVLLVVSIVKEI. Residues 279–342 lie on the Cytoplasmic side of the membrane; it reads NQRFKDKLPV…VETFQNTVGD (64 aa). A helical membrane pass occupies residues 343–363; it reads CFGIAMVAFAVAFSVASVYSL. Topologically, residues 364-374 are extracellular; it reads KYDYPLDGNQE. Residues 375 to 395 traverse the membrane as a helical segment; that stretch reads LIALGLGNIVCGVFRGFAGST. The Cytoplasmic segment spans residues 396-411; it reads ALSRSAVQESTGGKTQ. Residues 412–432 traverse the membrane as a helical segment; that stretch reads IAGLIGAIIVLIVVLAIGFLL. Residues 433–469 lie on the Extracellular side of the membrane; sequence APLQKSVLAALALGNLKGMLMQFAEIGRLWRKDKYDC. A helical membrane pass occupies residues 470–490; sequence LIWIMTFIFTIVLGLGLGLAA. Topologically, residues 491 to 701 are cytoplasmic; that stretch reads SVAFQLLTIV…EKLNRYEFFD (211 aa). Positions 525–720 constitute an STAS domain; it reads DYYDMYEPEG…LTIHDAVLHI (196 aa). Positions 761-764 match the PDZ-binding motif; that stretch reads ETKF.

This sequence belongs to the SLC26A/SulP transporter (TC 2.A.53) family. In terms of assembly, interacts with CFTR, SLC26A6 and NHERF1. Interacts with PDZK1. Interacts (via PDZ-binding motif) with NHERF4 (via the third PDZ domain); interaction leads to decreased expression of SLC26A3 on the cell membrane resulting in its reduced exchanger activity. N-glycosylation is required for efficient cell surface expression, and protection from proteolytic degradation. As to expression, expressed in the colon. Expression is significantly decreased in adenomas (polyps) and adenocarcinomas of the colon.

It localises to the apical cell membrane. Its subcellular location is the membrane. The protein localises to the cell membrane. It catalyses the reaction hydrogencarbonate(in) + 2 chloride(out) = hydrogencarbonate(out) + 2 chloride(in). Its activity is regulated as follows. Inhibited by acidic pH. Its function is as follows. Mediates chloride-bicarbonate exchange with a chloride bicarbonate stoichiometry of 2:1 in the intestinal epithelia. Plays a role in the chloride and bicarbonate homeostasis during sperm epididymal maturation and capacitation. In Homo sapiens (Human), this protein is Chloride anion exchanger (SLC26A3).